Here is a 254-residue protein sequence, read N- to C-terminus: H-2 class II histocompatibility antigen, I-E alpha chain (254 aa).

Positions 1–24 (RSRALILGVLALTTMLSLCGGEDD) are cleaved as a signal peptide. The segment at 25 to 109 (IEADHVAFYG…KDSNFTPAAN (85 aa)) is alpha-1. At 25-216 (IEADHVAFYG…IPAPMSELTE (192 aa)) the chain is on the extracellular side. 2 N-linked (GlcNAc...) asparagine glycosylation sites follow: Asn-103 and Asn-143. The interval 110 to 203 (EAPQATVFPK…GLEEPVLKHW (94 aa)) is alpha-2. Positions 112-204 (PQATVFPKSP…LEEPVLKHWE (93 aa)) constitute an Ig-like C1-type domain. A disulfide bridge connects residues Cys-132 and Cys-188. Positions 204 to 216 (EPEIPAPMSELTE) are connecting peptide. Residues 217–242 (TVVCALGLSVGLVGIVVGTIFIIQGL) form a helical membrane-spanning segment. At 243 to 254 (RSGGTSRHPGPL) the chain is on the cytoplasmic side.

This sequence belongs to the MHC class II family.

The protein localises to the membrane. This chain is H-2 class II histocompatibility antigen, I-E alpha chain, found in Mus musculus (Mouse).